Consider the following 235-residue polypeptide: Photosystem I assembly protein Ycf4 (235 aa).

2 helical membrane passes run 21–43 (NLCW…TSSY) and 63–85 (GIVM…CTIL).

It belongs to the Ycf4 family.

It localises to the plastid. It is found in the chloroplast thylakoid membrane. In terms of biological role, seems to be required for the assembly of the photosystem I complex. The polypeptide is Photosystem I assembly protein Ycf4 (Amborella trichopoda).